The primary structure comprises 62 residues: Photosystem II reaction center protein Z (62 aa).

2 helical membrane passes run 8–28 and 41–61; these read AVFA…VVFA and FSGT…NSLI.

Belongs to the PsbZ family. PSII is composed of 1 copy each of membrane proteins PsbA, PsbB, PsbC, PsbD, PsbE, PsbF, PsbH, PsbI, PsbJ, PsbK, PsbL, PsbM, PsbT, PsbY, PsbZ, Psb30/Ycf12, at least 3 peripheral proteins of the oxygen-evolving complex and a large number of cofactors. It forms dimeric complexes.

The protein resides in the plastid. Its subcellular location is the chloroplast thylakoid membrane. Its function is as follows. May control the interaction of photosystem II (PSII) cores with the light-harvesting antenna, regulates electron flow through the 2 photosystem reaction centers. PSII is a light-driven water plastoquinone oxidoreductase, using light energy to abstract electrons from H(2)O, generating a proton gradient subsequently used for ATP formation. The protein is Photosystem II reaction center protein Z of Lotus japonicus (Lotus corniculatus var. japonicus).